The sequence spans 179 residues: Large ribosomal subunit protein uL5 (179 aa).

Belongs to the universal ribosomal protein uL5 family. As to quaternary structure, part of the 50S ribosomal subunit; part of the 5S rRNA/L5/L18/L25 subcomplex. Contacts the 5S rRNA and the P site tRNA. Forms a bridge to the 30S subunit in the 70S ribosome.

This is one of the proteins that bind and probably mediate the attachment of the 5S RNA into the large ribosomal subunit, where it forms part of the central protuberance. In the 70S ribosome it contacts protein S13 of the 30S subunit (bridge B1b), connecting the 2 subunits; this bridge is implicated in subunit movement. Contacts the P site tRNA; the 5S rRNA and some of its associated proteins might help stabilize positioning of ribosome-bound tRNAs. In Rickettsia prowazekii (strain Madrid E), this protein is Large ribosomal subunit protein uL5.